The primary structure comprises 624 residues: Glutaminase 2 (624 aa).

Positions 1–20 (MDTQPIRLPSVAGATRSAGY) are disordered. The glutaminase stretch occupies residues 43–325 (GELADYIPEL…LSARFDLHML (283 aa)). 7 residues coordinate substrate: Ser-85, Asn-134, Glu-178, Asn-185, Tyr-209, Tyr-261, and Val-279. The region spanning 355–466 (QQILDERHSD…ALLDDAIEWA (112 aa)) is the STAS domain. An a nucleoside 3',5'-cyclic phosphate-binding site is contributed by 491 to 608 (LLAELDTDEI…IMRNLAAILA (118 aa)).

It belongs to the glutaminase family. Homotetramer.

It carries out the reaction L-glutamine + H2O = L-glutamate + NH4(+). The sequence is that of Glutaminase 2 (glsA2) from Bradyrhizobium diazoefficiens (strain JCM 10833 / BCRC 13528 / IAM 13628 / NBRC 14792 / USDA 110).